We begin with the raw amino-acid sequence, 170 residues long: Shikimate kinase (170 aa).

L11–T16 is a binding site for ATP. S15 contributes to the Mg(2+) binding site. Residues D33, R57, and G79 each coordinate substrate. An ATP-binding site is contributed by R119. R137 is a substrate binding site.

The protein belongs to the shikimate kinase family. Monomer. Mg(2+) serves as cofactor.

It is found in the cytoplasm. It catalyses the reaction shikimate + ATP = 3-phosphoshikimate + ADP + H(+). It functions in the pathway metabolic intermediate biosynthesis; chorismate biosynthesis; chorismate from D-erythrose 4-phosphate and phosphoenolpyruvate: step 5/7. Functionally, catalyzes the specific phosphorylation of the 3-hydroxyl group of shikimic acid using ATP as a cosubstrate. The protein is Shikimate kinase of Clostridium botulinum (strain Langeland / NCTC 10281 / Type F).